We begin with the raw amino-acid sequence, 257 residues long: Acyl-[acyl-carrier-protein]--UDP-N-acetylglucosamine O-acyltransferase (257 aa).

Belongs to the transferase hexapeptide repeat family. LpxA subfamily. As to quaternary structure, homotrimer.

The protein resides in the cytoplasm. It catalyses the reaction a (3R)-hydroxyacyl-[ACP] + UDP-N-acetyl-alpha-D-glucosamine = a UDP-3-O-[(3R)-3-hydroxyacyl]-N-acetyl-alpha-D-glucosamine + holo-[ACP]. It participates in glycolipid biosynthesis; lipid IV(A) biosynthesis; lipid IV(A) from (3R)-3-hydroxytetradecanoyl-[acyl-carrier-protein] and UDP-N-acetyl-alpha-D-glucosamine: step 1/6. Functionally, involved in the biosynthesis of lipid A, a phosphorylated glycolipid that anchors the lipopolysaccharide to the outer membrane of the cell. The chain is Acyl-[acyl-carrier-protein]--UDP-N-acetylglucosamine O-acyltransferase from Anaeromyxobacter dehalogenans (strain 2CP-1 / ATCC BAA-258).